The sequence spans 651 residues: Epithelial sodium channel subunit beta (651 aa).

Over 1–50 (MFLKRWFIRALHRLQKGPGYGYSELFVWYCNNTNTHGPKRLIIEGPKKKT) the chain is Cytoplasmic. Residues 51 to 71 (LWSLFTVTFACLVFWQWGLLI) traverse the membrane as a helical segment. Residues 72 to 541 (QTYLSWGVSV…GGQFGFWMGG (470 aa)) are Extracellular-facing. 8 disulfides stabilise this stretch: cysteine 98-cysteine 281, cysteine 205-cysteine 212, cysteine 258-cysteine 265, cysteine 370-cysteine 457, cysteine 395-cysteine 453, cysteine 399-cysteine 449, cysteine 408-cysteine 435, and cysteine 410-cysteine 424. A helical transmembrane segment spans residues 542-562 (SVLCIIEFGEVFIDCIWIAVI). Residues 563 to 651 (RFVKWYKNRK…TEHHSDSEDL (89 aa)) lie on the Cytoplasmic side of the membrane. Residues 612–651 (QPPDLYLPTTLEIPGTPPPKYDSLRVHPIDTEHHSDSEDL) are disordered. The span at 633–651 (DSLRVHPIDTEHHSDSEDL) shows a compositional bias: basic and acidic residues.

It belongs to the amiloride-sensitive sodium channel (TC 1.A.6) family. SCNN1B subfamily. As to quaternary structure, component of the heterotrimeric epithelial sodium channel (ENaC) composed of an alpha/SCNN1A, a beta/SCNN1B and a gamma/SCNN1G subunit. Strongly expressed in gill, kidney and rectum and more weakly in brain, eye, liver and muscle.

It localises to the apical cell membrane. The protein resides in the cytoplasmic vesicle membrane. The catalysed reaction is Na(+)(in) = Na(+)(out). Its activity is regulated as follows. Originally identified and characterized by its inhibition by the diuretic drug amiloride. This is one of the three pore-forming subunits of the heterotrimeric epithelial sodium channel (ENaC), a critical regulator of sodium balance and fluid homeostasis. ENaC operates in epithelial tissues, where it mediates the electrodiffusion of sodium ions from extracellular fluid through the apical membrane of cells, with water following osmotically. The chain is Epithelial sodium channel subunit beta from Neoceratodus forsteri (Australian lungfish).